We begin with the raw amino-acid sequence, 151 residues long: MGQGLSQPAQAVEEPSPPAVEAAPSSSPSPAPAPSSLEALAAEAMSFDEDGNESIDVKVQKALDCPCVAELKNGPCGSQFVDAFSCFLKSTEEEKGSDCVKPFIALQDCIKINPEAFSKEILEEEENDEEAEKSNLKVRAPAWSRESKPKL.

The interval 1 to 35 is disordered; the sequence is MGQGLSQPAQAVEEPSPPAVEAAPSSSPSPAPAPS. The span at 7–26 shows a compositional bias: low complexity; sequence QPAQAVEEPSPPAVEAAPSS. 3 disulfides stabilise this stretch: cysteine 65–cysteine 67, cysteine 76–cysteine 109, and cysteine 86–cysteine 99. One can recognise a CHCH domain in the interval 73-117; the sequence is NGPCGSQFVDAFSCFLKSTEEEKGSDCVKPFIALQDCIKINPEAF. Short sequence motifs (cx9C motif) lie at residues 76 to 86 and 99 to 109; these read CGSQFVDAFSC and CVKPFIALQDC. Residues 123-151 form a disordered region; the sequence is EEEENDEEAEKSNLKVRAPAWSRESKPKL.

Its subcellular location is the mitochondrion intermembrane space. It localises to the peroxisome matrix. Required for the import and folding of small cysteine-containing proteins in the mitochondrial intermembrane space. The sequence is that of Mitochondrial intermembrane space import and assembly protein 40 homolog from Oryza sativa subsp. japonica (Rice).